The chain runs to 132 residues: Small ribosomal subunit protein uS8 (132 aa).

This sequence belongs to the universal ribosomal protein uS8 family. In terms of assembly, part of the 30S ribosomal subunit. Contacts proteins S5 and S12.

Functionally, one of the primary rRNA binding proteins, it binds directly to 16S rRNA central domain where it helps coordinate assembly of the platform of the 30S subunit. The chain is Small ribosomal subunit protein uS8 from Enterococcus faecalis (strain ATCC 700802 / V583).